A 489-amino-acid polypeptide reads, in one-letter code: Glucose-6-phosphate 1-dehydrogenase (489 aa).

Residues Arg50 and Lys151 each coordinate NADP(+). The substrate site is built by His181, Lys185, Glu219, and Asp238. The active-site Proton acceptor is His243. Residues Lys341 and Lys346 each contribute to the substrate site.

Belongs to the glucose-6-phosphate dehydrogenase family. As to quaternary structure, homodimer.

The enzyme catalyses D-glucose 6-phosphate + NADP(+) = 6-phospho-D-glucono-1,5-lactone + NADPH + H(+). The protein operates within carbohydrate degradation; pentose phosphate pathway; D-ribulose 5-phosphate from D-glucose 6-phosphate (oxidative stage): step 1/3. Catalyzes the oxidation of glucose 6-phosphate to 6-phosphogluconolactone. This chain is Glucose-6-phosphate 1-dehydrogenase, found in Gluconobacter oxydans (strain 621H) (Gluconobacter suboxydans).